We begin with the raw amino-acid sequence, 534 residues long: UDP-glucuronosyltransferase 2A3 (534 aa).

The signal sequence occupies residues 1–18 (MVSEKCVAAFFLLQLCWA). The Extracellular portion of the chain corresponds to 19–493 (GCGFCSKVLV…SWFQYHSLDV (475 aa)). N-linked (GlcNAc...) asparagine glycosylation is present at Asn102. Lys135 carries the N6-succinyllysine modification. Asn204 carries an N-linked (GlcNAc...) asparagine glycan. The helical transmembrane segment at 494-514 (IGFLLLCVVTLTFIITKFCLF) threads the bilayer. The Cytoplasmic portion of the chain corresponds to 515 to 534 (VCQKLYMKESKKMGNRKKKN).

Belongs to the UDP-glycosyltransferase family. In terms of tissue distribution, highly expressed in liver, with lower levels in duodenum and jejunum.

Its subcellular location is the membrane. The enzyme catalyses glucuronate acceptor + UDP-alpha-D-glucuronate = acceptor beta-D-glucuronoside + UDP + H(+). UDP-glucuronosyltransferases catalyze phase II biotransformation reactions in which lipophilic substrates are conjugated with glucuronic acid to increase water solubility and enhance excretion. They are of major importance in the conjugation and subsequent elimination of potentially toxic xenobiotics and endogenous compounds. This chain is UDP-glucuronosyltransferase 2A3 (Ugt2a3), found in Mus musculus (Mouse).